A 158-amino-acid chain; its full sequence is Cytochrome c-type biogenesis protein CcmE (158 aa).

The Cytoplasmic segment spans residues 1 to 23; the sequence is MNSQSFKNFPSLKFISKKRRKER. Residues 24-44 traverse the membrane as a helical; Signal-anchor for type II membrane protein segment; sequence LLMVLLCLFIMAITTGLIVYA. The Periplasmic portion of the chain corresponds to 45–158; sequence MRNTANFFRT…DRLKKHHDIK (114 aa). Residues His138 and Tyr142 each coordinate heme.

Belongs to the CcmE/CycJ family.

It localises to the cell inner membrane. Functionally, heme chaperone required for the biogenesis of c-type cytochromes. Transiently binds heme delivered by CcmC and transfers the heme to apo-cytochromes in a process facilitated by CcmF and CcmH. The sequence is that of Cytochrome c-type biogenesis protein CcmE from Bartonella bacilliformis (strain ATCC 35685 / KC583 / Herrer 020/F12,63).